Reading from the N-terminus, the 408-residue chain is Prenyltransferase criF (408 aa).

Residues arginine 94, lysine 181, tyrosine 183, arginine 248, lysine 250, tyrosine 252, glutamine 334, tyrosine 336, tyrosine 400, and tyrosine 404 each coordinate dimethylallyl diphosphate.

It belongs to the tryptophan dimethylallyltransferase family. In terms of assembly, homodimer.

The enzyme catalyses preechinulin + dimethylallyl diphosphate = tardioxopiperazine B + diphosphate. It catalyses the reaction preechinulin + dimethylallyl diphosphate = tardioxopiperazine A + diphosphate. The catalysed reaction is tardioxopiperazine A + dimethylallyl diphosphate = echinulin + diphosphate. It carries out the reaction tardioxopiperazine A + dimethylallyl diphosphate = variecolorin L + diphosphate. The enzyme catalyses neoechinulin A + dimethylallyl diphosphate = variecolorin G + diphosphate. It catalyses the reaction neoechinulin A + dimethylallyl diphosphate = isoechinulin A + diphosphate. The catalysed reaction is isoechinulin A + dimethylallyl diphosphate = dehydroechinulin + diphosphate. It carries out the reaction neoechinulin B + dimethylallyl diphosphate = isoechinulin B + diphosphate. Its pathway is secondary metabolite biosynthesis. It participates in alkaloid biosynthesis. Its function is as follows. Prenyltransferase; part of the gene cluster that mediates the biosynthesis of echinulin family alkaloid. The pathway begins with the biosynthesis of the cyclic dipeptide cyclo-L-Trp-L-Ala (cyclo-TA) by the NRPS criC via condensation of L-alanine and L-tryptophan. The prenyltransferase criA then catalyzes the first prenylation step, a reverse prenylation reaction at C2, to yield preechinulin. Preechinulin is the substrate of the cytochrome P450 monooxygenase criE that catalyzes the formation of the double bond between C10 and C11 to produce neoechulin A. The unique prenyltransferase criF functions as a competitive enzyme with criE for preechinulin metabolization and uses preechinulin for effective regiospecific prenylations. Preechinulin is prenylated by criF at C5 or C7. C7-prenylation leads to accumulation of tardioxopiperazine B without further modification by criF. In contrast, the C5-prenylated tardioxopiperazine A can be prenylated again by criF, predominantly at C7 to form echinulin or less frequently at C4 to give variecolorin L. CriF also accepts neoechilunin A to produce varlecolorin G (prenylation at C5) or isoechinulin A (prenylation at C7). CriF further converts isoechinulin A into dehydroechinulin. Moreover, a yet unidentified enzyme can also convert neoechilunin A into neoechilunin B by introducing a double bond between positions C14 and C17 and thus provides a further substrate to criF for C5 and C7 prenylation. The protein is Prenyltransferase criF of Aspergillus cristatus (Chinese Fuzhuan brick tea-fermentation fungus).